The sequence spans 142 residues: MSAPSLPPAWQLYLKDHRISTFKNWPFLEGCACTPERMAAAGFIHCPTENEPDLAQCFFCFKELEGWEPDDDPIEEHKKHSSGCAFLSVKKQFEELTLSEFLKLDKERAKNKIAKETNNKQKEFEETAKKVRCAIEQLAASE.

The stretch at 18–88 (RISTFKNWPF…KHSSGCAFLS (71 aa)) is one BIR repeat. Position 20 is a phosphoserine; by AURKC (Ser20). Lys23 carries the N6-acetyllysine modification. The residue at position 34 (Thr34) is a Phosphothreonine; by CDK1 and CDK15. At Thr48 the chain carries Phosphothreonine. Zn(2+) is bound by residues Cys57, Cys60, His77, and Cys84. N6-acetyllysine occurs at positions 90, 110, 112, and 115. A Phosphothreonine; by AURKB modification is found at Thr117. N6-acetyllysine is present on Lys129.

The protein belongs to the IAP family. As to quaternary structure, monomer or homodimer. Exists as a homodimer in the apo state and as a monomer in the CPC-bound state. The monomer protects cells against apoptosis more efficiently than the dimer. Only the dimeric form is capable of enhancing tubulin stability in cells. When phosphorylated, interacts with LAMTOR5/HBXIP; the resulting complex binds pro-CASP9, as well as active CASP9, but much less efficiently. Component of the chromosomal passenger complex (CPC) composed of at least BIRC5/survivin, CDCA8/borealin, INCENP, AURKB or AURKC; in the complex forms a triple-helix bundle-based subcomplex with INCENP and CDCA8. Interacts with JTB. Interacts (via BIR domain) with histone H3 phosphorylated at 'Thr-3' (H3pT3). Interacts with EVI5. Interacts with GTP-bound RAN in both the S and M phases of the cell cycle. Interacts with USP9X. Interacts with tubulin. Interacts with BIRC2/c-IAP1. The acetylated form at Lys-129 interacts with STAT3. The monomeric form deacetylated at Lys-129 interacts with XPO1/CRM1. The monomeric form interacts with XIAP/BIRC4. Both the dimeric and monomeric form can interact with DIABLO/SMAC. Interacts with BIRC6/bruce. Interacts with FBXL7; this interaction facilitates the polyubiquitination and subsequent proteasomal degradation of BIRC5 by the SCF(FBXL7) E3 ubiquitin-protein ligase complex. In terms of processing, ubiquitinated by the Cul9-RING ubiquitin-protein ligase complex, leading to its degradation. Ubiquitination is required for centrosomal targeting. Deubiquitinated by USP35 or USP38; leading to stabilization. Post-translationally, acetylation at Lys-129 results in its homodimerization, while deacetylation promotes the formation of monomers which heterodimerize with XPO1/CRM1 which facilitates its nuclear export. The acetylated form represses STAT3 transactivation. The dynamic equilibrium between its acetylation and deacetylation at Lys-129 determines its interaction with XPO1/CRM1, its subsequent subcellular localization, and its ability to inhibit STAT3 transactivation. In vitro phosphorylation at Thr-117 by AURKB prevents interaction with INCENP and localization to mitotic chromosomes. Phosphorylation at Thr-48 by CK2 is critical for its mitotic and anti-apoptotic activities. Phosphorylation at Thr-34 by CDK15 is critical for its anti-apoptotic activity. Phosphorylation at Ser-20 by AURKC is critical for regulation of proper chromosome alignment and segregation, and possibly cytokinesis.

It is found in the cytoplasm. The protein localises to the nucleus. The protein resides in the chromosome. It localises to the centromere. Its subcellular location is the cytoskeleton. It is found in the spindle. The protein localises to the kinetochore. The protein resides in the midbody. Its function is as follows. Multitasking protein that has dual roles in promoting cell proliferation and preventing apoptosis. Component of a chromosome passage protein complex (CPC) which is essential for chromosome alignment and segregation during mitosis and cytokinesis. Acts as an important regulator of the localization of this complex; directs CPC movement to different locations from the inner centromere during prometaphase to midbody during cytokinesis and participates in the organization of the center spindle by associating with polymerized microtubules. Involved in the recruitment of CPC to centromeres during early mitosis via association with histone H3 phosphorylated at 'Thr-3' (H3pT3) during mitosis. The complex with RAN plays a role in mitotic spindle formation by serving as a physical scaffold to help deliver the RAN effector molecule TPX2 to microtubules. May counteract a default induction of apoptosis in G2/M phase. The acetylated form represses STAT3 transactivation of target gene promoters. May play a role in neoplasia. Inhibitor of CASP3 and CASP7. Essential for the maintenance of mitochondrial integrity and function. The polypeptide is Baculoviral IAP repeat-containing protein 5 (BIRC5) (Sus scrofa (Pig)).